Here is a 520-residue protein sequence, read N- to C-terminus: MPATPPMPGYDAVAVPVLDSTLGNTDIMTRISLTFPTQLSLALLQDSWYELVRAWPILAARVRHTPSTPSGLSFLIPQPDKVKELEQRSRTSHKDQEKHIVIVDASSRSIASFHPITAKAIQSSLSRDTVSVGAAPDNADSLKMTCSNATTSLKQLLRADQAYITAHATVWSDATTIALAFSHIAGDAFSVKAIFEAWRQTIESAAPAPLQGVGVDPFITYLPPHGKNSKSEDTDKQGERDVGLPLGFFQYGFIDKVRLAWNLISDIKIKRPEKKFGQYYMYMPEEKVQALMAQARADVDALVSASDDSEKQALDTRISTFNVLLAWLLQNIHAANPKRKRMSTVMTIVNAKTRPPARHDPSDYPPHQLWGGALGVPLEPLASGDYASLPLGQLALHIRTSLTAQIDPANMQANIVTLLRHTRWAKPSGKLIFFARPNHYLSGCTEWRSTRFGELDFGAAASPPSSVKPVAIGTDMEIAVSKRNRWVIFGDMGGGVWFSGFMTDHEATHRDGFGRYQHVQ.

Residues histidine 183 and aspartate 456 each act as proton acceptor in the active site.

The protein belongs to the plant acyltransferase family.

It functions in the pathway secondary metabolite biosynthesis. Its function is as follows. Acyl-CoA-dependent acyltransferase; part of the gene cluster that mediates the biosynthesis of mannosylerythritol lipids (MELs), surface-active substances that enhance the availability of water-insoluble substrates. Depending on the number of acetyl groups, mannosylerythritol lipids can be differentiated into MEL A (fully acetylated), MEL B and MEL C (monoacetylated at R-6 and R-4, respectively), and the fully deacetylated MEL D. The first step in the pathway is the generation of mannosylerythritol by the glycosyltransferase EMT1 which catalyzes the transfer of GDP-mannose to the C-4 atom of meso-erythritol. This reaction has to be stereospecific, since only mannosyl-D-erythritol is generated. The produced disaccharide is subsequently acylated with fatty acids of various lengths by the acyltransferases MAC1 and MAC2 at positions C-2 and C-3, repectively. The existence of MEL derivatives which carry an acetyl group at C-2 implies that at least MAC1 also accepts acetyl-CoA as a donor. The final step of MEL biosynthesis is the acetylation of the fully acylated mannosylerythritol lipids catalyzed by the acetyl-CoA-dependent acetyltransferase MAT1. MAT1 displays a relaxed regioselectivity and is able to transfer acetylgroups to both positions C-4 and C-6 of the mannosyl moiety. This chain is Acetyltransferase MAT1, found in Pseudozyma antarctica (strain T-34) (Yeast).